Here is a 429-residue protein sequence, read N- to C-terminus: Alanine aminotransferase (429 aa).

Positions 65 and 204 each coordinate L-alanine. Lysine 265 bears the N6-(pyridoxal phosphate)lysine mark. Residue arginine 403 participates in L-alanine binding.

The protein belongs to the class-I pyridoxal-phosphate-dependent aminotransferase family. As to quaternary structure, homodimer. The cofactor is pyridoxal 5'-phosphate.

It is found in the cytoplasm. The catalysed reaction is L-alanine + 2-oxoglutarate = pyruvate + L-glutamate. The protein is Alanine aminotransferase (aspC) of Mycobacterium bovis (strain ATCC BAA-935 / AF2122/97).